The chain runs to 819 residues: Nonribosomal peptide synthetase 9 (819 aa).

The interval 202–591 (LQAPTQHAVR…GRKDTQAKIR (390 aa)) is adenylation (A) domain. The Carrier domain maps to 722–798 (QPRNERERLI…SLAEFLSSSS (77 aa)). O-(pantetheine 4'-phosphoryl)serine is present on S759.

The protein belongs to the NRP synthetase family.

Its pathway is secondary metabolite biosynthesis. Functionally, nonribosomal peptide synthetase; part of the Fg3_54/C64 gene cluster that mediates the biosynthesis of the octapeptide fusaoctaxin A, a virulence factor that is required for cell-to-cell invasiveness of plant host. The 2 nonribosomal peptide synthetases NRPS9 and NRPS5 form an assembly line which likely utilizes GABA as a starter unit (loaded on the unique module M1 of NRPS9) and sequentially incorporates seven extender units composed of the residues L-Ala, L-allo-Ile, L-Ser, L-Val, L-Ser, L-Leu and L-Leu, respectively. During the process, each of the residues that are tethered on modules M3-M7 of NRPS5 containing an E domain can undergo an epimerization reaction to produce a D-configuration before the transpeptidation reaction occurs. The elongation of the peptidyl chain might be terminated by module M8-mediated L-Leu incorporation, followed by R domain-catalyzed 4 electron reduction to release the resulting octapeptide from the assembly line as an alcohol. Fusaoctaxin A is cleaved by the cluster specific ABC transporter FGM5 to the pentapeptide fusapentaxin A and the tripeptide fusatrixin A. The other enzymes from the cluster, FGM1, FGM2, FGM3 and FGM9 seem not to be involved in the biosynthesis of fusaoctaxin A and their functions have still to be determined. In Gibberella zeae (strain ATCC MYA-4620 / CBS 123657 / FGSC 9075 / NRRL 31084 / PH-1) (Wheat head blight fungus), this protein is Nonribosomal peptide synthetase 9.